The primary structure comprises 432 residues: MRNQSSLSDRLTVEVDCSSLGSNECPSMTSSFSPLESPTPTPTSIYSQGSLESPGWHGAGSLPNNTYERTPGSASMRSAFRLAGMASTESLGLPYGSMEGQERMPMPDFLSGYDENIEQLWMPSEAPKSYDHVAQGLAYHQGMHQYPTMARNTNNNYRHQAAAYLPESTTNPCLSRSIFHQPERVPSSMSSSMSMNNMLPWMNLGDSIAPQTIAPSQVGPVTPPPSYTDFPTSLSAFKQHSPTTPIRSCSLGTGSGADTPLSRLSGGPCEYMDDFQPSPVYRDGFQRPHRVASRKMLRRQTSKQNLMLENLPQVIKQVQFKCKEPGCNGRFKRQEHLKRHMKSHSKEKPHVCWVPGCHRAFSRSDNLNAHYTKTHSKRGGRNRYVATLDENSPDYDPEFRGQLTPDGRPIYGSKLDDPIPGAGDMSLDGWDE.

Disordered stretches follow at residues 22 to 72 (SNEC…RTPG) and 238 to 260 (KQHS…ADTP). Residues 29-44 (TSSFSPLESPTPTPTS) are compositionally biased toward low complexity. 2 stretches are compositionally biased toward polar residues: residues 62-72 (LPNNTYERTPG) and 238-252 (KQHS…CSLG). C2H2-type zinc fingers lie at residues 320–344 (FKCK…MKSH) and 350–375 (HVCW…TKTH). A disordered region spans residues 388 to 432 (LDENSPDYDPEFRGQLTPDGRPIYGSKLDDPIPGAGDMSLDGWDE).

The protein resides in the nucleus. Functionally, brlA, abaA and wetA are pivotal regulators of conidiophore development and conidium maturation. They act individually and together to regulate their own expression and that of numerous other sporulation-specific genes. Binds promoters of target genes at brlA response elements (BREs) containing the conserved sequence 5'-(C/A)(A/G)AGGG(G/A)-3'. Controls the expression of the conidiophore-specific phenol oxidase ivoB. Controls the expression of the hydrophobin rodA. Mediates the developmental switch from the indeterminate, apical growth pattern of vegetative cells to the budding growth pattern of conidiophores. Expression of brlA leads to activation of abaA, wetA and stuA, cessation of vegetative growth, cellular vacuolization and spore formation. This Emericella nidulans (strain FGSC A4 / ATCC 38163 / CBS 112.46 / NRRL 194 / M139) (Aspergillus nidulans) protein is C2H2 type master regulator of conidiophore development brlA.